The sequence spans 287 residues: MDLEVVVITGMSGSGKSVALHALEDAGYYCVDNLPPELLTSFVELEHAHHGHRVAVAMDVRSATALPLVPQQLAGLREQGVQVRQLFLDATDDVLVRRFSETRRRHPLSQAEMREGPRPLLHTMRLERELLAPLREQAHVIDTSTLRSAQLLSYVKDLLSVPPSRLTLVFQSFAFKRGISMDADYVFDVRMLPNPHYEPLLRALTGKDAPVIDYLRQQPEVALMLAHIGDFLDHWLDALAHNHRSYVTVAIGCTGGQHRSVYLVEQLAARFEGRWNTLRRHRELDGI.

10-17 serves as a coordination point for ATP; sequence GMSGSGKS. 59–62 is a GTP binding site; that stretch reads DVRS.

The protein belongs to the RapZ-like family.

Its function is as follows. Displays ATPase and GTPase activities. This Acidovorax sp. (strain JS42) protein is Nucleotide-binding protein Ajs_0902.